The chain runs to 292 residues: Phosphatidylglycerol--prolipoprotein diacylglyceryl transferase (292 aa).

Helical transmembrane passes span 24-44 (ISVHWYGIMYVSAMLIALLIA), 65-85 (FFIWVEIGVILGGRIGYVLIY), 110-130 (GISGFSYHGAMAGFVLAAIIF), and 136-156 (QSFWIFMDLSAISIPLGYVFG). Arginine 157 is a binding site for a 1,2-diacyl-sn-glycero-3-phospho-(1'-sn-glycerol). A run of 3 helical transmembrane segments spans residues 192–212 (SQLFEAFAEGIIVFILLICLL), 219–239 (GTLLVAYGVFYALARFVCEYF), and 256–276 (GQILSLVMLVISIFLGLFVFV).

The protein belongs to the Lgt family.

The protein localises to the cell inner membrane. It carries out the reaction L-cysteinyl-[prolipoprotein] + a 1,2-diacyl-sn-glycero-3-phospho-(1'-sn-glycerol) = an S-1,2-diacyl-sn-glyceryl-L-cysteinyl-[prolipoprotein] + sn-glycerol 1-phosphate + H(+). It functions in the pathway protein modification; lipoprotein biosynthesis (diacylglyceryl transfer). Functionally, catalyzes the transfer of the diacylglyceryl group from phosphatidylglycerol to the sulfhydryl group of the N-terminal cysteine of a prolipoprotein, the first step in the formation of mature lipoproteins. This chain is Phosphatidylglycerol--prolipoprotein diacylglyceryl transferase, found in Helicobacter hepaticus (strain ATCC 51449 / 3B1).